The chain runs to 228 residues: Response regulator MprA (228 aa).

The Response regulatory domain maps to 2-116; that stretch reads RILVVDDDRA…ELLARMRALL (115 aa). The residue at position 46 (D46) is a 4-aspartylphosphate. Residues 127 to 225 constitute a DNA-binding region (ompR/PhoB-type); the sequence is SVAMTFSDLT…VRGVGYVLRE (99 aa).

In terms of processing, phosphorylated and dephosphorylated by MprB.

The protein localises to the cytoplasm. In terms of biological role, member of the two-component regulatory system MprB/MprA which contributes to maintaining a balance among several systems involved in stress resistance and is required for establishment and maintenance of persistent infection in the host. Functions as a transcriptional regulator that recognizes a 19-bp nucleotide motif comprizing two loosely conserved 8-bp direct DNA-binding motif repeats separated by a 3-bp spacer region. The chain is Response regulator MprA (mprA) from Mycobacterium avium (strain 104).